We begin with the raw amino-acid sequence, 502 residues long: Probable malate:quinone oxidoreductase (502 aa).

Belongs to the MQO family. Requires FAD as cofactor.

The enzyme catalyses (S)-malate + a quinone = a quinol + oxaloacetate. It functions in the pathway carbohydrate metabolism; tricarboxylic acid cycle; oxaloacetate from (S)-malate (quinone route): step 1/1. This is Probable malate:quinone oxidoreductase from Synechococcus sp. (strain CC9605).